The sequence spans 943 residues: Translation initiation factor IF-2 (943 aa).

Residues Met-35 to Pro-359 form a disordered region. The segment covering Lys-57–Ala-76 has biased composition (low complexity). Composition is skewed to basic and acidic residues over residues Ser-92 to Gln-103 and Ala-110 to Asp-124. Over residues Ser-130 to Gln-141 the composition is skewed to polar residues. A compositionally biased stretch (low complexity) spans Thr-142–Arg-190. 3 stretches are compositionally biased toward basic and acidic residues: residues Ser-191–Asn-205, Ala-239–Ala-250, and Lys-259–Thr-271. 2 stretches are compositionally biased toward low complexity: residues Pro-289–Ala-299 and Asn-315–Arg-330. Over residues Asn-331 to Gln-342 the composition is skewed to basic residues. Basic and acidic residues predominate over residues Pro-346–Leu-358. Residues Pro-444 to Lys-613 enclose the tr-type G domain. A G1 region spans residues Gly-453–Thr-460. Gly-453 to Thr-460 contributes to the GTP binding site. Residues Gly-478–His-482 form a G2 region. The G3 stretch occupies residues Asp-499–Gly-502. GTP-binding positions include Asp-499–His-503 and Asn-553–Asp-556. Positions Asn-553–Asp-556 are G4. Residues Ser-589–Lys-591 are G5.

This sequence belongs to the TRAFAC class translation factor GTPase superfamily. Classic translation factor GTPase family. IF-2 subfamily.

Its subcellular location is the cytoplasm. Functionally, one of the essential components for the initiation of protein synthesis. Protects formylmethionyl-tRNA from spontaneous hydrolysis and promotes its binding to the 30S ribosomal subunits. Also involved in the hydrolysis of GTP during the formation of the 70S ribosomal complex. In Lacticaseibacillus paracasei (strain ATCC 334 / BCRC 17002 / CCUG 31169 / CIP 107868 / KCTC 3260 / NRRL B-441) (Lactobacillus paracasei), this protein is Translation initiation factor IF-2.